The sequence spans 2948 residues: MSSFDINKLVSCLQSTKIKDRNDGLSSVENLLNSKFKLNPKQFDVLVISMFTLIENEQISYLKNKASSAEFRLSYGSNCLKLLIEKSLDYNQELRNSNKPIKMKYKFYMSIIHSIRNYYFIEDNILEPCALDFTKILSSITSQGFFKEHLNYEDWLHIYNLLIKSSSFILDELTKINMHEKLLVEIFTSLHFLIQADSSISVNYLQLVSSSVPNNYFKLLKILSKTCNFFKKESMLTVLLFKIINKLIITLCTENFKFVNKLIQISIKLMISFHQTQLDSLQVQFLIFMNLSATHSFLNLHNFPKLIGDSSIISDDPFDSRQDISIRSSEDSSKTNQSIDSITDGDNDEVILYNVGILIQNLVSKLYSSNNQVKSEDINFMRKPTDDKNWFKLRSIYLRVSEYDEPDSLQPWLFNAGLSKFINSYFEFKKSLYEHNTINSLNTFNASIVRSDSIHQNKRQKLNILSEALYHSNNILDFCNKLIIDKTDYKVQQTGMQILTFYLEVYSPRVEISPLRNITSNNDVKLSGSSSTKNSSILDMSDSTLLNSTFDFPLTTNDSESQFNVNLIFKNVINAFDTDELNYWSLMATRAIIYDSLQRSIKIEEKYFFQLLKIALQLIKNKEVSRISCSLVYSIISRHSNEGLNKIMEKSLIIQIDNLIDLSEISGPFSICEESFQLWYSINKLVRNINLARNFILAERIQAWLISKWDIAANINIGFWYSNPSSHFEFVNFICWLCGINIEQSNQQNLLDLYCGVLNEANIFMNSYNELEVFFLNNCNVRDNTSSWIEIDIDNLSENKTSDDLLIRIIETGKNYLKEESVSVEAFEWAILEFRIVRLLKDHDIHNQLINSIQYQASDLLECINVMNATSNISDFIKVLSRTNFMLMKGGSIEIISTSFELGNFFDKISGNGLMYNANQRLLQQDQCSNNDNIDMFHDEFTSTNEPKTNFQTESKSTILNCINLGYVDVSCVQALKCLLIRNKIQGDSSVKTFDLIVKFLESLRSPEVLYCLFYLCRLLESGDLERSEIPIVSWTRIIRILGEGPLTNFDLERDELTIIIVSKLLTISFPIWHDNPDDAFKKDCLDMCSWLLQCGTKNLILTEASCIEFLIFMIAYSRYNNQTIIENNEIKSLFIKTFTKSTNNIKIKILPSLVNYLKSISVTDQMAIYKELFLNFDTPQQSIETCGTFCLFFCILSEASIQVTIAVIFNFMEYSRFEYFLPYIKGAFSLIYKRLNLKSTKELFNLFKYEILKSWWSYNFDIKQFPYDLFDYDDISSFLSSNCKELIAVSISNANNSNSGFLEMISSVKETDLASLVFDSLTLAIPLAYTREGIRNDMFKKLSDILKDQYRLQMKEKVTTIIFEVIKFTDMSNEKYIRDLGPKNEVTLQLFKNNSQILETPGSVSISLHSSLDLIRGLVEKYSVNPKSFWQVNVLYFLFRHISIILHNSVNVEQKLLCLRKFKLLIILGHKNIFSLQLANLLITTLSPFLKESDLHEDVANILSIFRIQKLGKYDESEFLPFIVKLVSCLVEVDGTITSINSRLLKTLEEYVTLSNKNRKVHVILQASMNVLKSKPIELTSSDIEFFLNDEAELKLCTMGVSNKHVMKLVSSIFMIVEFYDETRLHENVVKLLLNQKDTQQSKKFKLWSAEYLANYYLNGGLNNKISHIVSLVENDTLLEDTFESDISSMDNILNEILRYIVSDNLEIAACAESILGVLIWKFKTRKSDVQKFLNFDKHENDYASFIVPLDFHSCILLNSNDDELRILGHSIKEIISNLGQSLEGISFETWTSRLFLSITQELAKFTSIAPLFSSFATKVDSFSKTVLPGFICYYLNTTGKEGASQVIKLLSEFAKLRSYESDFIELLMQILLKIRIGAKKSIPIFMEVYSSLNINYFYEIAAKHKYFKTALMLFEDDVSKHEKHIDWSSNSRLLSNIYESIDNEDLIFGLPEETSLEYAINMINRRNETSDQLKFDSGLFDTNISFDLERRNTGILNSMVRNGFLGVSKLVSKSLNNVDTNNASFEWAWKLNCWDIPCPREANEEHQLIYKTLKQIHDYPSFASESCQESLLQTLHIKDAIINCCSSPKELRLNIERWLISLTCISNIRDVLRYKESDFRISLHEFSQRTDWFEQADFDMSENILLARKAALQITGDLSSDCMSLKKESIWLCVLHDLIRYNSIAIIAKESQKSVNSIVMINEISKTKFSESDHLLRDSISQLTKYQIARTLWQQGHTSIPVIMLKESQQNEAINTSISSMNITPSLINANLVDWMSNSRQDLASNIMAKYVLPTADMVTYVKELDQKAKVYEILANFCETQFRSLSLNDHVYKLEKSVDLKKSEIEELKSHYSRMPVAADEKKNAQRYYSKLKAQYIGELSDLNSLKGSICEFSDKAVEFYLKSILTDGDNDENLDKFFALWLEHSNKDDLHVSISDNVLSLPNHKLISWSTQLISRLSSEPSKFQNLLKSLIVGLCYDHPYHSLYGLISLKKHESYANKSSNVLLISKSVAATDIWQQLLTRGDNKINEILLNIEKFCNESIKLAEYKVSKGKSIQLDSLKIGNYWLQVLPHIPPPTINLPVDLSTRYNNVIYFDRVVPKVSIATSGLSLPKIATFYLSNGSEHKVLLKHGTDDLRQDSIMEQVFEKVNNIFRKDKETRKRELKVRTYNAVPLGPETGIIEFVPNSIALIDVIRPYHSKIDTLKADKARDLMKTCQSEDKTERYKTYDKISKKISPVLKYFFFDNYVAPDIWFDTRTSYTRGIATTSMVGHILGLGDRHCNNILLDKTSGEPIHIDLGVAFDQGKRLPIPETVPFRLTRDIVDGFGITGVNGVFDKSCEHTYRVLRQNKDHILAILDVLRWDPLYSWSLSPIRRKKLQNEGDRNEVGNLKPQEDGSEGGRAVLMVSDKLTAGGLSVEAIVRELVQEATSPHNLALIYCGWCPFY.

The region spanning 1898-2497 (YFYEIAAKHK…LYGLISLKKH (600 aa)) is the FAT domain. Residues 2602–2915 (VPKVSIATSG…VLMVSDKLTA (314 aa)) form the PI3K/PI4K catalytic domain. Residues 2608–2614 (ATSGLSL) form a G-loop region. Positions 2778–2786 (GLGDRHCNN) are catalytic loop. Positions 2798-2822 (HIDLGVAFDQGKRLPIPETVPFRLT) are activation loop. One can recognise an FATC domain in the interval 2916-2948 (GGLSVEAIVRELVQEATSPHNLALIYCGWCPFY).

This sequence belongs to the PI3/PI4-kinase family. ATM subfamily. In terms of assembly, associates with DNA double-strand breaks.

The protein resides in the nucleus. It localises to the chromosome. Its subcellular location is the telomere. The catalysed reaction is L-seryl-[protein] + ATP = O-phospho-L-seryl-[protein] + ADP + H(+). It catalyses the reaction L-threonyl-[protein] + ATP = O-phospho-L-threonyl-[protein] + ADP + H(+). Its function is as follows. Serine/threonine protein kinase which activates checkpoint signaling upon genotoxic stresses such as ionizing radiation (IR), ultraviolet light (UV), or DNA replication stalling, thereby acting as a DNA damage sensor. Recognizes the substrate consensus sequence [ST]-Q. Phosphorylates histone H2A to form H2AS128ph (gamma-H2A) at sites of DNA damage, involved in the regulation of DNA damage response mechanism. Required for the control of telomere length and genome stability. This chain is Serine/threonine-protein kinase TEL1 (TEL1), found in Debaryomyces hansenii (strain ATCC 36239 / CBS 767 / BCRC 21394 / JCM 1990 / NBRC 0083 / IGC 2968) (Yeast).